The sequence spans 428 residues: tRNA(Ile)-lysidine synthase (428 aa).

Position 28–33 (28–33 (SGGVDS)) interacts with ATP.

Belongs to the tRNA(Ile)-lysidine synthase family.

It localises to the cytoplasm. The enzyme catalyses cytidine(34) in tRNA(Ile2) + L-lysine + ATP = lysidine(34) in tRNA(Ile2) + AMP + diphosphate + H(+). Ligates lysine onto the cytidine present at position 34 of the AUA codon-specific tRNA(Ile) that contains the anticodon CAU, in an ATP-dependent manner. Cytidine is converted to lysidine, thus changing the amino acid specificity of the tRNA from methionine to isoleucine. This Streptococcus pyogenes serotype M18 (strain MGAS8232) protein is tRNA(Ile)-lysidine synthase.